The chain runs to 199 residues: ATP-dependent Clp protease proteolytic subunit 2 (199 aa).

Ser95 functions as the Nucleophile in the catalytic mechanism. Residue His120 is part of the active site.

Belongs to the peptidase S14 family. In terms of assembly, fourteen ClpP subunits assemble into 2 heptameric rings which stack back to back to give a disk-like structure with a central cavity, resembling the structure of eukaryotic proteasomes.

It is found in the cytoplasm. The enzyme catalyses Hydrolysis of proteins to small peptides in the presence of ATP and magnesium. alpha-casein is the usual test substrate. In the absence of ATP, only oligopeptides shorter than five residues are hydrolyzed (such as succinyl-Leu-Tyr-|-NHMec, and Leu-Tyr-Leu-|-Tyr-Trp, in which cleavage of the -Tyr-|-Leu- and -Tyr-|-Trp bonds also occurs).. Its function is as follows. Cleaves peptides in various proteins in a process that requires ATP hydrolysis. Has a chymotrypsin-like activity. Plays a major role in the degradation of misfolded proteins. This is ATP-dependent Clp protease proteolytic subunit 2 from Mycolicibacterium paratuberculosis (strain ATCC BAA-968 / K-10) (Mycobacterium paratuberculosis).